Here is an 813-residue protein sequence, read N- to C-terminus: Protein mac-1 (813 aa).

2 coiled-coil regions span residues 58–89 (VREA…VQEI) and 122–152 (SDDS…TVLN). 2 disordered regions span residues 97 to 131 (TRKR…ERAA) and 152 to 193 (NLYT…GAVS). Residues 158-172 (SAPSTPVSTPKNQAT) are compositionally biased toward polar residues. Low complexity predominate over residues 175–191 (PPGASAAPPALPRGLGA). ATP is bound by residues 246–253 (GPPGCGKT) and 575–582 (GPPGCGKT).

This sequence belongs to the AAA ATPase family. In terms of assembly, found in a complex composed of ced-3, ced-4 and mac-1 or of ced-9, ced-4 and mac-1. Within the complex, interacts with ced-4.

Functionally, probably together with ced-9, plays a modest role in preventing ced-4 and caspase ced-3-mediated apoptosis. This chain is Protein mac-1, found in Caenorhabditis elegans.